Consider the following 251-residue polypeptide: Triosephosphate isomerase (251 aa).

9 to 11 lines the substrate pocket; it reads NWK. His95 functions as the Electrophile in the catalytic mechanism. Glu167 acts as the Proton acceptor in catalysis. Residues Gly173, Ser212, and 233 to 234 contribute to the substrate site; that span reads GG.

This sequence belongs to the triosephosphate isomerase family. In terms of assembly, homodimer.

The protein resides in the cytoplasm. The enzyme catalyses D-glyceraldehyde 3-phosphate = dihydroxyacetone phosphate. It functions in the pathway carbohydrate biosynthesis; gluconeogenesis. The protein operates within carbohydrate degradation; glycolysis; D-glyceraldehyde 3-phosphate from glycerone phosphate: step 1/1. Involved in the gluconeogenesis. Catalyzes stereospecifically the conversion of dihydroxyacetone phosphate (DHAP) to D-glyceraldehyde-3-phosphate (G3P). The chain is Triosephosphate isomerase from Pseudomonas fluorescens (strain ATCC BAA-477 / NRRL B-23932 / Pf-5).